A 478-amino-acid polypeptide reads, in one-letter code: Islet cell autoantigen 1 (478 aa).

Positions 50–253 (ASDADLDAKL…TSHTMAAIHE (204 aa)) constitute an AH domain. Over residues 306–317 (EHKDSSAYKTEE) the composition is skewed to basic and acidic residues. Disordered stretches follow at residues 306 to 365 (EHKD…SGDK) and 398 to 422 (LKEP…GFLP).

In terms of tissue distribution, predominantly expressed in brain, pancreas and stomach mucosa. High expression also found in stomach muscle and testis.

The protein resides in the cytoplasm. It is found in the cytosol. The protein localises to the golgi apparatus membrane. Its subcellular location is the cytoplasmic vesicle. It localises to the secretory vesicle membrane. The protein resides in the secretory vesicle. It is found in the synaptic vesicle membrane. In terms of biological role, may play a role in neurotransmitter secretion. This Mus musculus (Mouse) protein is Islet cell autoantigen 1.